Reading from the N-terminus, the 260-residue chain is Thiazole synthase (260 aa).

Residue lysine 96 is the Schiff-base intermediate with DXP of the active site. Residues glycine 157, 184-185 (AG), and 206-207 (NT) each bind 1-deoxy-D-xylulose 5-phosphate.

It belongs to the ThiG family. In terms of assembly, homotetramer. Forms heterodimers with either ThiH or ThiS.

It localises to the cytoplasm. It catalyses the reaction [ThiS sulfur-carrier protein]-C-terminal-Gly-aminoethanethioate + 2-iminoacetate + 1-deoxy-D-xylulose 5-phosphate = [ThiS sulfur-carrier protein]-C-terminal Gly-Gly + 2-[(2R,5Z)-2-carboxy-4-methylthiazol-5(2H)-ylidene]ethyl phosphate + 2 H2O + H(+). The protein operates within cofactor biosynthesis; thiamine diphosphate biosynthesis. In terms of biological role, catalyzes the rearrangement of 1-deoxy-D-xylulose 5-phosphate (DXP) to produce the thiazole phosphate moiety of thiamine. Sulfur is provided by the thiocarboxylate moiety of the carrier protein ThiS. In vitro, sulfur can be provided by H(2)S. In Bradyrhizobium sp. (strain ORS 278), this protein is Thiazole synthase.